The chain runs to 639 residues: 3D-(3,5/4)-trihydroxycyclohexane-1,2-dione hydrolase (639 aa).

Thiamine diphosphate is bound at residue Glu-62. The thiamine pyrophosphate binding stretch occupies residues 438-518 (SLPGDLQRMW…INILLFDNCG (81 aa)). Mg(2+) is bound by residues Asp-489 and Asn-516.

It belongs to the TPP enzyme family. Mg(2+) is required as a cofactor. Requires thiamine diphosphate as cofactor.

The enzyme catalyses 3D-3,5/4-trihydroxycyclohexane-1,2-dione + H2O = 5-deoxy-D-glucuronate + H(+). The protein operates within polyol metabolism; myo-inositol degradation into acetyl-CoA; acetyl-CoA from myo-inositol: step 3/7. In terms of biological role, involved in the cleavage of the C1-C2 bond of 3D-(3,5/4)-trihydroxycyclohexane-1,2-dione (THcHDO) to yield 5-deoxy-glucuronate (5DG). The protein is 3D-(3,5/4)-trihydroxycyclohexane-1,2-dione hydrolase of Clostridium perfringens (strain ATCC 13124 / DSM 756 / JCM 1290 / NCIMB 6125 / NCTC 8237 / Type A).